Here is a 601-residue protein sequence, read N- to C-terminus: MQQQSNIRNFAIIAHIDHGKSTLADRLIEYCNALEAREMCQQVLDSMDIEKERGITIKAQTVRLVYKADDGCVYHLNLMDTPGHVDFAYEVSRSLAACESSLLVVDASQGVEAQTLANLYQAVDNNHKILIVLNKIDLPAANPQQVQQQIEDVIGIDASDALMISAKIGLGIKDVLQAIVTKLPSPNGDSQSQLKALLIDSWYDSYLGVVILVRVVDGKIEKGMRIRMCSNNAVYTVENVGFFSPKKQISGVLYTGEIGFVTAAIKQVADCRVGDTITDDKKPCAQILPGFKPNLPVVFCGLYPSDASQFNHLKDSLQKLRLNDASFEFEQESSGALGFGFRCGFLGLLHLEIIQERLEREFDLDMITTAPSVMYKVYLNTGKVIDVHNPADLPEMQKIKSMSEPWVEATIFIPDQYLGAILGLCTEKRGVQVDLTYVNGRAKLVYLLPLNEIVFDFYDKLKSYSKGYASFDWQMNSYKQSDLIKLSILVNGNPVDALSTIVHRSKAEFRGRELCKRLKDLIPAHLFQIAIQAAIGSRIIARETIRALRKDVLAKCYGGDITRKRKLLEKQKAGKKRMRNIGNVEIPQSAFIAALKITNKD.

The 183-residue stretch at 5–187 folds into the tr-type G domain; sequence SNIRNFAIIA…AIVTKLPSPN (183 aa). GTP is bound by residues 17-22 and 134-137; these read DHGKST and NKID.

It belongs to the TRAFAC class translation factor GTPase superfamily. Classic translation factor GTPase family. LepA subfamily.

Its subcellular location is the cell inner membrane. The catalysed reaction is GTP + H2O = GDP + phosphate + H(+). Its function is as follows. Required for accurate and efficient protein synthesis under certain stress conditions. May act as a fidelity factor of the translation reaction, by catalyzing a one-codon backward translocation of tRNAs on improperly translocated ribosomes. Back-translocation proceeds from a post-translocation (POST) complex to a pre-translocation (PRE) complex, thus giving elongation factor G a second chance to translocate the tRNAs correctly. Binds to ribosomes in a GTP-dependent manner. This Orientia tsutsugamushi (strain Ikeda) (Rickettsia tsutsugamushi) protein is Elongation factor 4.